The following is a 669-amino-acid chain: Soluble guanylate cyclase 89Db (669 aa).

His-104 is a binding site for heme. The stretch at 430–458 (QHCSKLEIMFEKEEQRSDELEKSLELADS) forms a coiled coil. Residues 494 to 620 (SVIFIEVMNI…DTVNTASRME (127 aa)) enclose the Guanylate cyclase domain.

It belongs to the adenylyl cyclase class-4/guanylyl cyclase family. As to quaternary structure, heterodimer; with Gyc88E, in the presence of magnesium or manganese. It depends on heme as a cofactor. As to expression, expressed in embryos in a segmental pattern in the ventral nerve cord (VNC) and in the brain, beginning at stage 13 and continuing through to stage 17. Colocalized with Gyc-89Db in several peripheral neurons that innervate trachea, basiconical sensilla and the sensory cones in the posterior segments of the embryo. Expression in wandering 3rd instar larvae is most prominent in a small cluster of cells located in the anterior medial region of each brain lobe. In the VNC, expression is found in scattered cells both laterally and at the midline.

Its subcellular location is the cytoplasm. It catalyses the reaction GTP = 3',5'-cyclic GMP + diphosphate. Its activity is regulated as follows. Probably not activated by nitric oxide (NO). Heterodimer exhibits some stimulation, compounds (SIN-1 and two of the NONOates) that were ineffective at stimulating Gyc-88E homodimer did stimulate the heterodimer. Heterodimers with Gyc88E are activated in response to changing oxygen concentrations, alerting flies to hypoxic environments. Under normal oxygen concentrations, oxygen binds to the heme group and results in low levels of guanylyl cyclase activity. When exposed to reduced oxygen concentrations, the oxygen dissociates from the heme group resulting in activation of the enzyme. This chain is Soluble guanylate cyclase 89Db, found in Drosophila melanogaster (Fruit fly).